The following is a 583-amino-acid chain: 15-cis-phytoene desaturase, chloroplastic/chromoplastic (583 aa).

The N-terminal 111 residues, 1-111 (MPQIGLVSAV…FRASPRPTKP (111 aa)), are a transit peptide targeting the chloroplast and chromoplast. Residues 118 to 134 (GAGLGGLSTAKYLADAG), 141 to 142 (EA), Lys149, 166 to 167 (HI), and Tyr172 each bind FAD. Arg307 contributes to the substrate binding site. FAD contacts are provided by Ile349 and Asp538. Ala546 is a substrate binding site. Met548 provides a ligand contact to FAD.

Belongs to the carotenoid/retinoid oxidoreductase family. As to quaternary structure, homotetramer. Requires FAD as cofactor.

It localises to the plastid. The protein localises to the chloroplast. It is found in the chromoplast. Its subcellular location is the membrane. It carries out the reaction 2 a plastoquinone + 15-cis-phytoene = 9,9',15-tri-cis-zeta-carotene + 2 a plastoquinol. The protein operates within carotenoid biosynthesis; lycopene biosynthesis. Converts phytoene into zeta-carotene via the intermediary of phytofluene by the symmetrical introduction of two double bonds at the C-11 and C-11' positions of phytoene with a concomitant isomerization of two neighboring double bonds at the C9 and C9' positions from trans to cis. The chain is 15-cis-phytoene desaturase, chloroplastic/chromoplastic (PDS) from Solanum lycopersicum (Tomato).